The primary structure comprises 137 residues: Putative pre-16S rRNA nuclease (137 aa).

Belongs to the YqgF nuclease family.

Its subcellular location is the cytoplasm. Functionally, could be a nuclease involved in processing of the 5'-end of pre-16S rRNA. The chain is Putative pre-16S rRNA nuclease from Desulforamulus reducens (strain ATCC BAA-1160 / DSM 100696 / MI-1) (Desulfotomaculum reducens).